Here is a 185-residue protein sequence, read N- to C-terminus: Ribosome-recycling factor (185 aa).

Belongs to the RRF family.

It localises to the cytoplasm. Responsible for the release of ribosomes from messenger RNA at the termination of protein biosynthesis. May increase the efficiency of translation by recycling ribosomes from one round of translation to another. The sequence is that of Ribosome-recycling factor from Streptococcus thermophilus (strain CNRZ 1066).